Reading from the N-terminus, the 370-residue chain is ATP synthase gamma chain, chloroplastic (370 aa).

A chloroplast-targeting transit peptide spans 1–55; that stretch reads MKFFCVAGLLASAAAFQAQPAAFTTYSPAVGGATSNVFSESSSPAHRNRRATIVM. Cysteine 145 is an active-site residue.

This sequence belongs to the ATPase gamma chain family. As to quaternary structure, F-type ATPases have 2 components, CF(1) - the catalytic core - and CF(0) - the membrane proton channel. CF(1) has five subunits: alpha(3), beta(3), gamma(1), delta(1), epsilon(1). CF(0) has four main subunits: a, b, b' and c.

The protein localises to the plastid. It localises to the chloroplast thylakoid membrane. Produces ATP from ADP in the presence of a proton gradient across the membrane. The gamma chain is believed to be important in regulating ATPase activity and the flow of protons through the CF(0) complex. This is ATP synthase gamma chain, chloroplastic (ATPC) from Trieres chinensis (Marine centric diatom).